A 200-amino-acid chain; its full sequence is Recombination protein RecR (200 aa).

The C4-type zinc finger occupies 57–72 (CNECRTFTEEDVCHIC). A Toprim domain is found at 81–176 (GLLCVVESPA…DASRIAHGVP (96 aa)).

The protein belongs to the RecR family.

Its function is as follows. May play a role in DNA repair. It seems to be involved in an RecBC-independent recombinational process of DNA repair. It may act with RecF and RecO. The sequence is that of Recombination protein RecR from Vibrio vulnificus (strain CMCP6).